Here is a 379-residue protein sequence, read N- to C-terminus: tRNA (guanine(26)-N(2))-dimethyltransferase (379 aa).

The interval 1–26 (MECREITEGSTTFTAPVQDETTQFPP) is disordered. The region spanning 4–369 (REITEGSTTF…APLPLIEEKI (366 aa)) is the Trm1 methyltransferase domain. The span at 8–25 (EGSTTFTAPVQDETTQFP) shows a compositional bias: polar residues. S-adenosyl-L-methionine contacts are provided by arginine 41, arginine 66, aspartate 82, aspartate 108, and alanine 109. Positions 237, 240, 257, and 260 each coordinate Zn(2+).

This sequence belongs to the class I-like SAM-binding methyltransferase superfamily. Trm1 family.

It carries out the reaction guanosine(26) in tRNA + 2 S-adenosyl-L-methionine = N(2)-dimethylguanosine(26) in tRNA + 2 S-adenosyl-L-homocysteine + 2 H(+). In terms of biological role, dimethylates a single guanine residue at position 26 of a number of tRNAs using S-adenosyl-L-methionine as donor of the methyl groups. This chain is tRNA (guanine(26)-N(2))-dimethyltransferase, found in Methanocorpusculum labreanum (strain ATCC 43576 / DSM 4855 / Z).